The primary structure comprises 385 residues: S-adenosylmethionine synthase (385 aa).

His-16 contributes to the ATP binding site. Asp-18 provides a ligand contact to Mg(2+). Glu-44 is a K(+) binding site. L-methionine-binding residues include Glu-57 and Gln-100. The interval 100 to 110 is flexible loop; it reads QSPDINQGVDR. ATP contacts are provided by residues 164–166, 230–231, Asp-239, 245–246, Ala-262, and Lys-266; these read DGK, KF, and RK. Asp-239 serves as a coordination point for L-methionine. Lys-270 lines the L-methionine pocket.

It belongs to the AdoMet synthase family. Homotetramer; dimer of dimers. Mg(2+) serves as cofactor. K(+) is required as a cofactor.

It is found in the cytoplasm. It carries out the reaction L-methionine + ATP + H2O = S-adenosyl-L-methionine + phosphate + diphosphate. It participates in amino-acid biosynthesis; S-adenosyl-L-methionine biosynthesis; S-adenosyl-L-methionine from L-methionine: step 1/1. Catalyzes the formation of S-adenosylmethionine (AdoMet) from methionine and ATP. The overall synthetic reaction is composed of two sequential steps, AdoMet formation and the subsequent tripolyphosphate hydrolysis which occurs prior to release of AdoMet from the enzyme. The polypeptide is S-adenosylmethionine synthase (Helicobacter acinonychis (strain Sheeba)).